Here is a 349-residue protein sequence, read N- to C-terminus: UDP-3-O-acylglucosamine N-acyltransferase (349 aa).

The Proton acceptor role is filled by His-240.

The protein belongs to the transferase hexapeptide repeat family. LpxD subfamily. In terms of assembly, homotrimer.

The enzyme catalyses a UDP-3-O-[(3R)-3-hydroxyacyl]-alpha-D-glucosamine + a (3R)-hydroxyacyl-[ACP] = a UDP-2-N,3-O-bis[(3R)-3-hydroxyacyl]-alpha-D-glucosamine + holo-[ACP] + H(+). It participates in bacterial outer membrane biogenesis; LPS lipid A biosynthesis. In terms of biological role, catalyzes the N-acylation of UDP-3-O-acylglucosamine using 3-hydroxyacyl-ACP as the acyl donor. Is involved in the biosynthesis of lipid A, a phosphorylated glycolipid that anchors the lipopolysaccharide to the outer membrane of the cell. The protein is UDP-3-O-acylglucosamine N-acyltransferase of Porphyromonas gingivalis (strain ATCC BAA-308 / W83).